We begin with the raw amino-acid sequence, 412 residues long: Proteasome-activating nucleotidase (412 aa).

A coiled-coil region spans residues 15–72 (EDLYRYLLERVTNLEDRNTELREQLRQIEADKRYLETQKVRYEREVRKFKGEIEQMKS). ATP is bound by residues 197 to 202 (GTGKTL) and His336. Residues 410-412 (MFA) form a docks into pockets in the proteasome alpha-ring to cause gate opening region.

This sequence belongs to the AAA ATPase family. As to quaternary structure, homohexamer. The hexameric complex has a two-ring architecture resembling a top hat that caps the 20S proteasome core at one or both ends. Upon ATP-binding, the C-terminus of PAN interacts with the alpha-rings of the proteasome core by binding to the intersubunit pockets.

The protein resides in the cytoplasm. Functionally, ATPase which is responsible for recognizing, binding, unfolding and translocation of substrate proteins into the archaeal 20S proteasome core particle. Is essential for opening the gate of the 20S proteasome via an interaction with its C-terminus, thereby allowing substrate entry and access to the site of proteolysis. Thus, the C-termini of the proteasomal ATPase function like a 'key in a lock' to induce gate opening and therefore regulate proteolysis. Unfolding activity requires energy from ATP hydrolysis, whereas ATP binding alone promotes ATPase-20S proteasome association which triggers gate opening, and supports translocation of unfolded substrates. The chain is Proteasome-activating nucleotidase from Methanosphaerula palustris (strain ATCC BAA-1556 / DSM 19958 / E1-9c).